The chain runs to 156 residues: MIQSQINRNIRLDLADAILLSKAKKDLSFAEIADGTGLAEAFVTAALLGQQALPADAARLVGAKLDLDEDAILLLQMIPLRGCIDDRIPTDPTMYRFYEMLQVYGTTLKALVHEKFGDGIISAINFKLDVKKVADPEGGERAVITLDGKYLPTKPF.

Active-site residues include R96, E99, and S122.

Belongs to the cyanase family.

The enzyme catalyses cyanate + hydrogencarbonate + 3 H(+) = NH4(+) + 2 CO2. Functionally, catalyzes the reaction of cyanate with bicarbonate to produce ammonia and carbon dioxide. This Escherichia coli O7:K1 (strain IAI39 / ExPEC) protein is Cyanate hydratase.